Consider the following 122-residue polypeptide: MANNTTGFTRIIKAAGYSWKGLRAAWINEAAFRQEGVAVLLAVVIACWLDVDAITRVLLISSVMLVMIVEILNSAIEAVVDRIGSEYHELSGRAKDMGSAAVLIAIIVAVITWCILLWSHFG.

ATP contacts are provided by Arg10 and Tyr17. Substrate contacts are provided by residues Arg10, 14-19 (AAGYSW), and 23-26 (RAAW). ATP is bound at residue Glu29. A divalent metal cation is bound at residue Glu29. Residues 31-35 (AFRQE), 48-51 (WLDV), Arg56, and Glu70 each bind substrate. Residues 35-55 (EGVAVLLAVVIACWLDVDAIT) form a helical membrane-spanning segment. The chain crosses the membrane as a helical span at residues 57–77 (VLLISSVMLVMIVEILNSAIE). Glu70 acts as the Proton acceptor in catalysis. Residues Glu77, 86-88 (EYH), and 95-96 (KD) each bind ATP. Glu77 provides a ligand contact to a divalent metal cation. A helical membrane pass occupies residues 98-118 (GSAAVLIAIIVAVITWCILLW). Residues Ser99 and 113-118 (WCILLW) contribute to the substrate site.

The protein belongs to the bacterial diacylglycerol kinase family. Mg(2+) serves as cofactor.

It is found in the cell inner membrane. The enzyme catalyses a 1,2-diacyl-sn-glycerol + ATP = a 1,2-diacyl-sn-glycero-3-phosphate + ADP + H(+). Functionally, catalyzes the ATP-dependent phosphorylation of sn-l,2-diacylglycerol (DAG) to phosphatidic acid. Involved in the recycling of diacylglycerol produced as a by-product during membrane-derived oligosaccharide (MDO) biosynthesis. This is Diacylglycerol kinase (dgkA) from Shigella flexneri.